The sequence spans 411 residues: Bestrophin homolog 26 (411 aa).

4 helical membrane passes run Phe-30–Ile-50, Ser-73–Val-93, Ile-235–Val-255, and Thr-272–Met-292.

This sequence belongs to the anion channel-forming bestrophin (TC 1.A.46) family. Calcium-sensitive chloride channel subfamily. As to quaternary structure, forms oligomers.

Its subcellular location is the cell membrane. Functionally, forms chloride channels. The chain is Bestrophin homolog 26 (best-26) from Caenorhabditis elegans.